We begin with the raw amino-acid sequence, 337 residues long: Eukaryotic translation initiation factor 3 subunit H (337 aa).

Positions 21-153 (VQCDGLAVMK…LKAYRLTPQA (133 aa)) constitute an MPN domain.

It belongs to the eIF-3 subunit H family. Component of the eukaryotic translation initiation factor 3 (eIF-3) complex. The eIF-3 complex interacts with pix. Interacts with mxt.

The protein localises to the cytoplasm. Its function is as follows. Component of the eukaryotic translation initiation factor 3 (eIF-3) complex, which is involved in protein synthesis of a specialized repertoire of mRNAs and, together with other initiation factors, stimulates binding of mRNA and methionyl-tRNAi to the 40S ribosome. The eIF-3 complex specifically targets and initiates translation of a subset of mRNAs involved in cell proliferation. This is Eukaryotic translation initiation factor 3 subunit H from Drosophila grimshawi (Hawaiian fruit fly).